The primary structure comprises 170 residues: Penton capsid protein P1 (170 aa).

The segment at 1-25 (MVETTQHFVSIESSNRPDPANTTPA) is disordered. N-linked (Glc...) asparagine; by host glycans are attached at residues Asn21, Asn93, Asn129, and Asn137.

In terms of processing, glycosylated. The pattern of glycosylation sites are unusual.

It localises to the virion. Functionally, constitutes the 12 pentameric capsomers positioned at the 5-fold vertices of the outer capsid shell. One of the vertex is composed of a variant of P1 (type II pentameric capsomer) and has thereby a structure slightly different from the other verteces (type I pentameric capsomers). The protein is Penton capsid protein P1 of Paramecium bursaria Chlorella virus 1 (PBCV-1).